Consider the following 353-residue polypeptide: Photosystem II protein D1 (353 aa).

Position 2 is an N-acetylthreonine (Thr-2). The residue at position 2 (Thr-2) is a Phosphothreonine. 3 helical membrane passes run 29–46, 118–133, and 142–156; these read NIGW…TATS, HFLL…EWEL, and WIAV…AATA. Position 118 (His-118) interacts with chlorophyll a. Tyr-126 lines the pheophytin a pocket. 2 residues coordinate [CaMn4O5] cluster: Asp-170 and Glu-189. Residues 197–218 traverse the membrane as a helical segment; the sequence is FHMLGVAGVFGGSLFSAMHGSL. His-198 contacts chlorophyll a. Residues His-215 and 264 to 265 contribute to the a quinone site; that span reads SF. His-215 serves as a coordination point for Fe cation. A Fe cation-binding site is contributed by His-272. Residues 274-288 form a helical membrane-spanning segment; the sequence is FLAAWPVVGIWFTAL. Residues His-332, Glu-333, Asp-342, and Ala-344 each contribute to the [CaMn4O5] cluster site. Residues 345–353 constitute a propeptide that is removed on maturation; the sequence is AVEAPAVNG.

It belongs to the reaction center PufL/M/PsbA/D family. PSII is composed of 1 copy each of membrane proteins PsbA, PsbB, PsbC, PsbD, PsbE, PsbF, PsbH, PsbI, PsbJ, PsbK, PsbL, PsbM, PsbT, PsbX, PsbY, PsbZ, Psb30/Ycf12, at least 3 peripheral proteins of the oxygen-evolving complex and a large number of cofactors. It forms dimeric complexes. The D1/D2 heterodimer binds P680, chlorophylls that are the primary electron donor of PSII, and subsequent electron acceptors. It shares a non-heme iron and each subunit binds pheophytin, quinone, additional chlorophylls, carotenoids and lipids. D1 provides most of the ligands for the Mn4-Ca-O5 cluster of the oxygen-evolving complex (OEC). There is also a Cl(-1) ion associated with D1 and D2, which is required for oxygen evolution. The PSII complex binds additional chlorophylls, carotenoids and specific lipids. serves as cofactor. Tyr-161 forms a radical intermediate that is referred to as redox-active TyrZ, YZ or Y-Z. In terms of processing, C-terminally processed by CTPA; processing is essential to allow assembly of the oxygen-evolving complex and thus photosynthetic growth.

The protein resides in the plastid. It is found in the chloroplast thylakoid membrane. The enzyme catalyses 2 a plastoquinone + 4 hnu + 2 H2O = 2 a plastoquinol + O2. Photosystem II (PSII) is a light-driven water:plastoquinone oxidoreductase that uses light energy to abstract electrons from H(2)O, generating O(2) and a proton gradient subsequently used for ATP formation. It consists of a core antenna complex that captures photons, and an electron transfer chain that converts photonic excitation into a charge separation. The D1/D2 (PsbA/PsbD) reaction center heterodimer binds P680, the primary electron donor of PSII as well as several subsequent electron acceptors. The polypeptide is Photosystem II protein D1 (Dumortiera hirsuta (Liverwort)).